Here is an 812-residue protein sequence, read N- to C-terminus: Lon protease (812 aa).

One can recognise a Lon N-terminal domain in the interval 12 to 205; sequence LPMLPLRGVL…YLCELLAKEM (194 aa). An ATP-binding site is contributed by 357–364; that stretch reads GPPGVGKT. Residues 593-774 enclose the Lon proteolytic domain; that stretch reads ENQVGVATGL…DEVLEETLLK (182 aa). Catalysis depends on residues serine 680 and lysine 723.

It belongs to the peptidase S16 family. In terms of assembly, homohexamer. Organized in a ring with a central cavity.

The protein localises to the cytoplasm. It carries out the reaction Hydrolysis of proteins in presence of ATP.. In terms of biological role, ATP-dependent serine protease that mediates the selective degradation of mutant and abnormal proteins as well as certain short-lived regulatory proteins. Required for cellular homeostasis and for survival from DNA damage and developmental changes induced by stress. Degrades polypeptides processively to yield small peptide fragments that are 5 to 10 amino acids long. Binds to DNA in a double-stranded, site-specific manner. This chain is Lon protease, found in Syntrophomonas wolfei subsp. wolfei (strain DSM 2245B / Goettingen).